Here is a 549-residue protein sequence, read N- to C-terminus: Small ribosomal subunit protein bS1 (549 aa).

S1 motif domains lie at 21–87 (GSIV…LSRE), 105–171 (KATV…VSRR), 192–260 (GSEV…LGLK), 277–347 (NSKL…LGLK), 364–434 (GDKV…LGIK), and 451–512 (GAVV…LSVK).

The protein belongs to the bacterial ribosomal protein bS1 family.

In terms of biological role, binds mRNA; thus facilitating recognition of the initiation point. It is needed to translate mRNA with a short Shine-Dalgarno (SD) purine-rich sequence. This Haemophilus influenzae (strain ATCC 51907 / DSM 11121 / KW20 / Rd) protein is Small ribosomal subunit protein bS1 (rpsA).